A 259-amino-acid polypeptide reads, in one-letter code: Deoxyribose-phosphate aldolase (259 aa).

Asp-102 serves as the catalytic Proton donor/acceptor. Residue Lys-167 is the Schiff-base intermediate with acetaldehyde of the active site. Catalysis depends on Lys-201, which acts as the Proton donor/acceptor.

Belongs to the DeoC/FbaB aldolase family. DeoC type 2 subfamily.

It localises to the cytoplasm. The catalysed reaction is 2-deoxy-D-ribose 5-phosphate = D-glyceraldehyde 3-phosphate + acetaldehyde. It functions in the pathway carbohydrate degradation; 2-deoxy-D-ribose 1-phosphate degradation; D-glyceraldehyde 3-phosphate and acetaldehyde from 2-deoxy-alpha-D-ribose 1-phosphate: step 2/2. Functionally, catalyzes a reversible aldol reaction between acetaldehyde and D-glyceraldehyde 3-phosphate to generate 2-deoxy-D-ribose 5-phosphate. The chain is Deoxyribose-phosphate aldolase from Salmonella dublin (strain CT_02021853).